The primary structure comprises 296 residues: Homoserine kinase (296 aa).

ATP is bound at residue 84 to 94; that stretch reads PLARGLGSSSS.

The protein belongs to the GHMP kinase family. Homoserine kinase subfamily.

The protein resides in the cytoplasm. It carries out the reaction L-homoserine + ATP = O-phospho-L-homoserine + ADP + H(+). Its pathway is amino-acid biosynthesis; L-threonine biosynthesis; L-threonine from L-aspartate: step 4/5. In terms of biological role, catalyzes the ATP-dependent phosphorylation of L-homoserine to L-homoserine phosphate. The chain is Homoserine kinase from Lactococcus lactis subsp. cremoris (strain SK11).